A 172-amino-acid chain; its full sequence is Ly6/PLAUR domain-containing protein 6B (172 aa).

An N-terminal signal peptide occupies residues 1 to 25; it reads MLLLCHILAVTILQILIISENWVFA. One can recognise a UPAR/Ly6 domain in the interval 46 to 137; it reads FKCFTCENAG…VELPTNHTNA (92 aa). Residues 46 to 140 are sufficient for inhibiting alpha-7 nAChR currents; that stretch reads FKCFTCENAG…PTNHTNAVFA (95 aa). 6 cysteine pairs are disulfide-bonded: Cys48–Cys76, Cys51–Cys60, Cys69–Cys95, Cys101–Cys120, Cys106–Cys117, and Cys121–Cys126. Residue Ser148 is the site of GPI-anchor amidated serine attachment. Residues 149–172 constitute a propeptide, removed in mature form; sequence GSSVSSVPSPYLLVLAWLFMLPLL.

It is found in the cell membrane. Its function is as follows. Likely acts as a modulator of nicotinic acetylcholine receptors (nAChRs) activity. In vitro acts on nAChRs in a subtype- and stoichiometry-dependent manner. Modulates specifically alpha-3(3):beta-4(2) nAChRs by enhancing the sensitivity to ACh, decreasing ACh-induced maximal current response and increasing the rate of desensitization to ACh; has no effect on alpha-7 homomeric nAChRs; modulates alpha-3(2):alpha-5:beta-4(2) nAChRs in the context of CHRNA5/alpha-5 variant Asn-398 but not its wild-type sequence. However, according to another report in vitro it can weakly inhibits alpha-7 nAChRs. The chain is Ly6/PLAUR domain-containing protein 6B (Lypd6b) from Mus musculus (Mouse).